A 366-amino-acid polypeptide reads, in one-letter code: Peptide chain release factor 2 (366 aa).

Position 251 is an N5-methylglutamine (Gln251).

Belongs to the prokaryotic/mitochondrial release factor family. In terms of processing, methylated by PrmC. Methylation increases the termination efficiency of RF2.

The protein localises to the cytoplasm. Functionally, peptide chain release factor 2 directs the termination of translation in response to the peptide chain termination codons UGA and UAA. The polypeptide is Peptide chain release factor 2 (prfB) (Listeria monocytogenes serovar 1/2a (strain ATCC BAA-679 / EGD-e)).